Here is a 439-residue protein sequence, read N- to C-terminus: Probable glycine dehydrogenase (decarboxylating) subunit 1 (439 aa).

This sequence belongs to the GcvP family. N-terminal subunit subfamily. In terms of assembly, the glycine cleavage system is composed of four proteins: P, T, L and H. In this organism, the P 'protein' is a heterodimer of two subunits.

The enzyme catalyses N(6)-[(R)-lipoyl]-L-lysyl-[glycine-cleavage complex H protein] + glycine + H(+) = N(6)-[(R)-S(8)-aminomethyldihydrolipoyl]-L-lysyl-[glycine-cleavage complex H protein] + CO2. Its function is as follows. The glycine cleavage system catalyzes the degradation of glycine. The P protein binds the alpha-amino group of glycine through its pyridoxal phosphate cofactor; CO(2) is released and the remaining methylamine moiety is then transferred to the lipoamide cofactor of the H protein. The polypeptide is Probable glycine dehydrogenase (decarboxylating) subunit 1 (Aquifex aeolicus (strain VF5)).